The following is a 204-amino-acid chain: Putative peptidase PfaP (204 aa).

An N-terminal signal peptide occupies residues 1–27; that stretch reads MRLRKTRKIVVSMKDMAASGGYYIASS. S19 (nucleophile) is an active-site residue. Catalysis depends on K70, which acts as the Proton donor/acceptor.

Belongs to the peptidase S49 family.

Functionally, possible protease. May be involved in export of periplasmic flagella proteins. This Leptospira borgpetersenii protein is Putative peptidase PfaP (pfaP).